The sequence spans 382 residues: Galactokinase (382 aa).

Glu34–Asp37 contacts substrate. Gly124–Ser130 contributes to the ATP binding site. Ser130 and Glu162 together coordinate Mg(2+). Asp174 acts as the Proton acceptor in catalysis. Residue Tyr223 participates in substrate binding.

It belongs to the GHMP kinase family. GalK subfamily.

The protein localises to the cytoplasm. It carries out the reaction alpha-D-galactose + ATP = alpha-D-galactose 1-phosphate + ADP + H(+). The protein operates within carbohydrate metabolism; galactose metabolism. Catalyzes the transfer of the gamma-phosphate of ATP to D-galactose to form alpha-D-galactose-1-phosphate (Gal-1-P). The polypeptide is Galactokinase (Salmonella agona (strain SL483)).